The following is a 297-amino-acid chain: ATP synthase gamma chain (297 aa).

The protein belongs to the ATPase gamma chain family. As to quaternary structure, F-type ATPases have 2 components, CF(1) - the catalytic core - and CF(0) - the membrane proton channel. CF(1) has five subunits: alpha(3), beta(3), gamma(1), delta(1), epsilon(1). CF(0) has three main subunits: a, b and c.

It localises to the cell membrane. Functionally, produces ATP from ADP in the presence of a proton gradient across the membrane. The gamma chain is believed to be important in regulating ATPase activity and the flow of protons through the CF(0) complex. This Micrococcus luteus (strain ATCC 4698 / DSM 20030 / JCM 1464 / CCM 169 / CCUG 5858 / IAM 1056 / NBRC 3333 / NCIMB 9278 / NCTC 2665 / VKM Ac-2230) (Micrococcus lysodeikticus) protein is ATP synthase gamma chain.